A 241-amino-acid chain; its full sequence is Probable FKBP-type peptidyl-prolyl cis-trans isomerase (241 aa).

In terms of domain architecture, PPIase FKBP-type spans 150 to 241 (TDTVKVHYTG…VLDVNPKSEK (92 aa)).

The protein belongs to the FKBP-type PPIase family.

It carries out the reaction [protein]-peptidylproline (omega=180) = [protein]-peptidylproline (omega=0). Its function is as follows. PPIases accelerate the folding of proteins. It catalyzes the cis-trans isomerization of proline imidic peptide bonds in oligopeptides. The polypeptide is Probable FKBP-type peptidyl-prolyl cis-trans isomerase (Haemophilus influenzae (strain ATCC 51907 / DSM 11121 / KW20 / Rd)).